Here is a 511-residue protein sequence, read N- to C-terminus: MKDKLVMLIILDGYGINPRKEGNAIEAANKPNIDRFMREYPNTIVRTSGMDVGLPDGQMGNSEVGHTNIGAGRIVYQELTRITKSIQDGDFFEKKEFLDAAENCRKHNSKLHLFGLLSDGGVHSHNTHLYGLLEFAKRQNLKDVYVHCFFDGRDVPPDSAMGYVEELENKIREIGVGEIATVMGRYYAMDRDNRWERVKLAYDAMVLGRGNQAQSAKEAVAESYKRQEFDEFVKPTVIMKNGSPVATVGENDSIIFFNFRPDRAREITRAFTEVNFSGFEREKGYFPVFFVCMTQYDKTFENVVVAFKPESLENTFGEYISKKGLRQLRIAETEKYAHVTFFFNGGVEAVYEGEDRILINSPKVATYDLKPEMSAYEVTDKVLECINKKEYDVIILNYANPDMVGHTGVFEAAKAAIEAIDECLGKVVPAVLEQNGVVLITADHGNSEQMIDYETGGPFTAHTTNPVPLIVIGLGDVKLREGRLADLAPTMLDILGFEKPKEMTGESLIVK.

Mn(2+) is bound by residues aspartate 12 and serine 62. Serine 62 acts as the Phosphoserine intermediate in catalysis. Substrate is bound by residues histidine 123, arginine 153–aspartate 154, arginine 185, arginine 191, arginine 260–arginine 263, and lysine 335. Mn(2+) contacts are provided by aspartate 402, histidine 406, aspartate 443, histidine 444, and histidine 462.

The protein belongs to the BPG-independent phosphoglycerate mutase family. As to quaternary structure, monomer. Mn(2+) serves as cofactor.

The catalysed reaction is (2R)-2-phosphoglycerate = (2R)-3-phosphoglycerate. Its pathway is carbohydrate degradation; glycolysis; pyruvate from D-glyceraldehyde 3-phosphate: step 3/5. Its function is as follows. Catalyzes the interconversion of 2-phosphoglycerate and 3-phosphoglycerate. The chain is 2,3-bisphosphoglycerate-independent phosphoglycerate mutase from Acetivibrio thermocellus (strain ATCC 27405 / DSM 1237 / JCM 9322 / NBRC 103400 / NCIMB 10682 / NRRL B-4536 / VPI 7372) (Clostridium thermocellum).